A 630-amino-acid chain; its full sequence is Forkhead box protein O (630 aa).

The interval 1–45 (MDGFVQEWSNLPRSDNGLHMDQLVGELPTDGGFEPQTRARSNTWP) is disordered. Position 43 is a phosphothreonine; by PKB/AKT1 (Thr43). Positions 92-198 (WGNLSYADLI…ETSRYEKRRG (107 aa)) form a DNA-binding region, fork-head. Ser187 carries the phosphoserine; by PKB/AKT1 modification. The interval 214–260 (GLNDATPSPSSSVSEGLDHFPESPLHSGGFQLSPDFRQRASSNASSC) is disordered. Residues 218-227 (ATPSPSSSVS) show a composition bias toward polar residues. Ser255 carries the post-translational modification Phosphoserine; by PKB/AKT1. Ser258, Ser259, and Ser264 each carry phosphoserine. 2 disordered regions span residues 318 to 379 (SAAS…QQQQ) and 403 to 432 (TRDGLSPNSVTTTMSPAYPNSEPSSDSLNT). 2 stretches are compositionally biased toward low complexity: residues 332–350 (QQQQQQQQQQAQQQSQLPQ) and 367–379 (QPQAQQQQQQQQQ). Polar residues-rich tracts occupy residues 408-417 (SPNSVTTTMS) and 423-432 (SEPSSDSLNT).

Interacts with melt.

The protein resides in the cytoplasm. Its subcellular location is the nucleus. Its function is as follows. Transcription factor involved in the regulation of the insulin signaling pathway. Consistently activates both the downstream target Thor\d4EBP and the feedback control target InR. Involved in negative regulation of the cell cycle, modulating cell growth and proliferation. In response to cellular stresses, such as nutrient deprivation or increased levels of reactive oxygen species, foxo is activated and inhibits growth through the action of target genes such as Thor. Foxo activated in the adult fat body can regulate lifespan in adults; an insulin peptide itself may function as one secondary messenger of insulin-regulated aging. Also regulates Lip4, homolog of human acid lipases, thereby acting as a key modulator of lipid metabolism by insulin signaling and integrates insulin responses to glucose and lipid homeostasis. The polypeptide is Forkhead box protein O (Drosophila grimshawi (Hawaiian fruit fly)).